The sequence spans 638 residues: ATP-dependent zinc metalloprotease FtsH (638 aa).

Topologically, residues 1–4 are cytoplasmic; it reads MNNQ. Residues 5 to 25 traverse the membrane as a helical segment; that stretch reads GKNIIVWAVIFVFVILLFNVF. At 26–103 the chain is on the periplasmic side; the sequence is QSDGLLSSKN…VVPPETRMNT (78 aa). A helical transmembrane segment spans residues 104–124; that stretch reads FLSFLISWFPMLLLIGVWVFF. The Cytoplasmic segment spans residues 125–638; the sequence is MRQMHGGGKA…PIKAKKEDKS (514 aa). ATP is bound at residue 195–202; that stretch reads GPPGTGKT. His417 provides a ligand contact to Zn(2+). Glu418 is a catalytic residue. Positions 421 and 495 each coordinate Zn(2+). The disordered stretch occupies residues 523 to 544; sequence SASEDMYTNRNSSSDRSESTSE.

The protein in the central section; belongs to the AAA ATPase family. This sequence in the C-terminal section; belongs to the peptidase M41 family. As to quaternary structure, homohexamer. Requires Zn(2+) as cofactor.

The protein resides in the cell inner membrane. Its function is as follows. Acts as a processive, ATP-dependent zinc metallopeptidase for both cytoplasmic and membrane proteins. Plays a role in the quality control of integral membrane proteins. The polypeptide is ATP-dependent zinc metalloprotease FtsH (Rickettsia bellii (strain RML369-C)).